Reading from the N-terminus, the 916-residue chain is Isoleucine--tRNA ligase (916 aa).

Residues 57–67 carry the 'HIGH' region motif; the sequence is PYANGNLHMGH. E554 lines the L-isoleucyl-5'-AMP pocket. The 'KMSKS' region motif lies at 595–599; it reads KMSKS. Position 598 (K598) interacts with ATP. Residues C885, C888, C905, and C908 each contribute to the Zn(2+) site.

This sequence belongs to the class-I aminoacyl-tRNA synthetase family. IleS type 1 subfamily. Monomer. Zn(2+) serves as cofactor.

Its subcellular location is the cytoplasm. It carries out the reaction tRNA(Ile) + L-isoleucine + ATP = L-isoleucyl-tRNA(Ile) + AMP + diphosphate. In terms of biological role, catalyzes the attachment of isoleucine to tRNA(Ile). As IleRS can inadvertently accommodate and process structurally similar amino acids such as valine, to avoid such errors it has two additional distinct tRNA(Ile)-dependent editing activities. One activity is designated as 'pretransfer' editing and involves the hydrolysis of activated Val-AMP. The other activity is designated 'posttransfer' editing and involves deacylation of mischarged Val-tRNA(Ile). This is Isoleucine--tRNA ligase from Staphylococcus epidermidis (strain ATCC 12228 / FDA PCI 1200).